A 275-amino-acid chain; its full sequence is Light-independent protochlorophyllide reductase iron-sulfur ATP-binding protein (275 aa).

Residues 10–15 and lysine 39 contribute to the ATP site; that span reads GIGKST. Residue serine 14 coordinates Mg(2+). [4Fe-4S] cluster contacts are provided by cysteine 95 and cysteine 129. An ATP-binding site is contributed by 180-181; the sequence is NR.

It belongs to the NifH/BchL/ChlL family. Homodimer. Protochlorophyllide reductase is composed of three subunits; ChlL, ChlN and ChlB. [4Fe-4S] cluster serves as cofactor.

The enzyme catalyses chlorophyllide a + oxidized 2[4Fe-4S]-[ferredoxin] + 2 ADP + 2 phosphate = protochlorophyllide a + reduced 2[4Fe-4S]-[ferredoxin] + 2 ATP + 2 H2O. The protein operates within porphyrin-containing compound metabolism; chlorophyll biosynthesis (light-independent). Functionally, component of the dark-operative protochlorophyllide reductase (DPOR) that uses Mg-ATP and reduced ferredoxin to reduce ring D of protochlorophyllide (Pchlide) to form chlorophyllide a (Chlide). This reaction is light-independent. The L component serves as a unique electron donor to the NB-component of the complex, and binds Mg-ATP. The chain is Light-independent protochlorophyllide reductase iron-sulfur ATP-binding protein from Gloeobacter violaceus (strain ATCC 29082 / PCC 7421).